The sequence spans 396 residues: Elongation factor Tu 2 (396 aa).

In terms of domain architecture, tr-type G spans 10–206 (KPHVNIGTIG…AVDEYIPTPE (197 aa)). Residues 19-26 (GHVDHGKT) form a G1 region. 19 to 26 (GHVDHGKT) is a binding site for GTP. Thr26 provides a ligand contact to Mg(2+). The G2 stretch occupies residues 60–64 (GITIN). A G3 region spans residues 81-84 (DCPG). GTP contacts are provided by residues 81-85 (DCPGH) and 136-139 (NKVD). Residues 136–139 (NKVD) form a G4 region. The G5 stretch occupies residues 174 to 176 (SAL).

This sequence belongs to the TRAFAC class translation factor GTPase superfamily. Classic translation factor GTPase family. EF-Tu/EF-1A subfamily. In terms of assembly, monomer.

It is found in the cytoplasm. The enzyme catalyses GTP + H2O = GDP + phosphate + H(+). Its function is as follows. GTP hydrolase that promotes the GTP-dependent binding of aminoacyl-tRNA to the A-site of ribosomes during protein biosynthesis. This Hyphomonas neptunium (strain ATCC 15444) protein is Elongation factor Tu 2.